Reading from the N-terminus, the 419-residue chain is Cell division protein FtsZ (419 aa).

GTP-binding positions include 22–26, 109–111, Glu140, Arg144, and Asp188; these read GGGGN and GSG. Positions 397-419 are disordered; that stretch reads ERFEAPISQDEDELDTPPFFKNR.

This sequence belongs to the FtsZ family. As to quaternary structure, homodimer. Polymerizes to form a dynamic ring structure in a strictly GTP-dependent manner. Interacts directly with several other division proteins. Interacts with CcrZ; the interaction is direct.

It is found in the cytoplasm. Its function is as follows. Essential cell division protein that forms a contractile ring structure (Z ring) at the future cell division site. The regulation of the ring assembly controls the timing and the location of cell division. One of the functions of the FtsZ ring is to recruit other cell division proteins to the septum to produce a new cell wall between the dividing cells. Binds GTP and shows GTPase activity. This Streptococcus pneumoniae serotype 2 (strain D39 / NCTC 7466) protein is Cell division protein FtsZ.